Consider the following 242-residue polypeptide: Cell division protein FtsQ (242 aa).

Topologically, residues 1-12 (MWDNAEAMERLT) are cytoplasmic. A helical transmembrane segment spans residues 13–32 (RWLLVMMAMLLAASGLVWFY). The Periplasmic segment spans residues 33–242 (NSNHLPVKQV…DGLPEKESEE (210 aa)). A POTRA domain is found at 37 to 106 (LPVKQVSLKG…DTVEVVLTER (70 aa)).

This sequence belongs to the FtsQ/DivIB family. FtsQ subfamily. Part of a complex composed of FtsB, FtsL and FtsQ.

The protein localises to the cell inner membrane. In terms of biological role, essential cell division protein. May link together the upstream cell division proteins, which are predominantly cytoplasmic, with the downstream cell division proteins, which are predominantly periplasmic. May control correct divisome assembly. The sequence is that of Cell division protein FtsQ from Neisseria gonorrhoeae (strain ATCC 700825 / FA 1090).